Reading from the N-terminus, the 148-residue chain is CASP-like protein 1 (148 aa).

3 helical membrane passes run 31–51, 74–94, and 121–141; these read FIYF…TSLL, VLLL…GYIG, and IAAG…SFFT.

Belongs to the Casparian strip membrane proteins (CASP) family. Homodimer and heterodimers.

The protein resides in the cell membrane. The polypeptide is CASP-like protein 1 (Panax ginseng (Korean ginseng)).